A 212-amino-acid polypeptide reads, in one-letter code: Glycerol-3-phosphate acyltransferase (212 aa).

The next 4 helical transmembrane spans lie at 3-23 (ILLAALVAYLIGSVSFAVVVS), 78-98 (DVAVACVAIAVFLGHLYPVFF), 115-135 (AVHPVLGLATALTWLIVAFFF), and 155-177 (FLFGTSHNPVAWAVLAMSVLLVW).

This sequence belongs to the PlsY family. Probably interacts with PlsX.

It is found in the cell inner membrane. It carries out the reaction an acyl phosphate + sn-glycerol 3-phosphate = a 1-acyl-sn-glycero-3-phosphate + phosphate. The protein operates within lipid metabolism; phospholipid metabolism. Functionally, catalyzes the transfer of an acyl group from acyl-phosphate (acyl-PO(4)) to glycerol-3-phosphate (G3P) to form lysophosphatidic acid (LPA). This enzyme utilizes acyl-phosphate as fatty acyl donor, but not acyl-CoA or acyl-ACP. The chain is Glycerol-3-phosphate acyltransferase from Burkholderia ambifaria (strain ATCC BAA-244 / DSM 16087 / CCUG 44356 / LMG 19182 / AMMD) (Burkholderia cepacia (strain AMMD)).